Consider the following 770-residue polypeptide: MFRYESLEDCPLDEDEDAFQGLGEEDEEIDQFNDDTFGSGAVDDDWQEAHERLAELEEKLPVAADEQTGNGERDEMDLLGDHEENLAERLSKMVIENELEDPAVMRAVQTRPVLQPQPGSLNSSIWDGSEVLRRIRGPLLAQEMPTVSVLEYALPQRPPQGPEDDRDLSERALPRRSTSPIIGSPPVRAVPIGTPPKQMAVPSFNQQILCPKPVHVRPPMPPRYPAPYGERMSPNQLCSVPNSSLLGHPFPPSVPPVLSPLQRAQLLGGAQLQPGRMSPSQFARVPGFVGSPLAAMNPKLLQGRVGQMLPPAPGFRAFFSAPPPATPPPQQHPPGPGPHLQNLRPQAPMFRPDTTHLHPQHRRLLHQRQLQSRNQHRNLNGTGDRGGHRVSHQDHLRKDPYANLMLQREKDWVSKIQMMQLQSTDPYLDDFYYQNYFEKLEKSSAAEEMQGDGPKKERTKLITPQVARLEHAYKPVQFEGSLGKLTVSSVNNPRKMIDAVVTSRSEDDETKEKQVRDKRRKTLVIIEKTYSLLLDVEDYERRYLLSLEEERPALTDERKHKIWSMYDNLRGKLPGQERPSDDHFVQIMCIRKGKRMVARILPFLSTEQAADILMATARNLPFLIKKDAQDEVLPCLLSPFSLLLYHLPSVTVTSLLQQLMNLPQSATAPAPSNSHLTAVLQNKFGLSLLLILLSRGEDLHSSDPTVESTQNNQWTEVMFMATQELLRIPQAALAKPISIPTNLVSLFSRYVDRQKLNLLETKLQLVQGMR.

The interval 1–42 is disordered; sequence MFRYESLEDCPLDEDEDAFQGLGEEDEEIDQFNDDTFGSGAV. The interval 1-84 is region A; interaction with DDX6/RCK; the sequence is MFRYESLEDC…EMDLLGDHEE (84 aa). An involved in nuclear foci localization region spans residues 1 to 397; that stretch reads MFRYESLEDC…HRVSHQDHLR (397 aa). Acidic residues predominate over residues 7–33; it reads LEDCPLDEDEDAFQGLGEEDEEIDQFN. The segment at 85-388 is region N; interaction with decapping machinery; sequence NLAERLSKMV…LNGTGDRGGH (304 aa). The Nuclear export signal motif lies at 86 to 95; it reads LAERLSKMVI. Serine 177 carries the post-translational modification Phosphoserine. Threonine 178 is subject to Phosphothreonine. Phosphoserine is present on residues serine 179 and serine 184. A Phosphothreonine modification is found at threonine 194. An asymmetric dimethylarginine mark is found at arginine 217, arginine 223, and arginine 263. The interval 223 to 397 is involved in RNA-binding; sequence RYPAPYGERM…HRVSHQDHLR (175 aa). Serine 278 is modified (phosphoserine). An Asymmetric dimethylarginine modification is found at arginine 284. 2 disordered regions span residues 320–341 and 369–394; these read SAPP…PHLQ and QLQS…SHQD. Positions 321 to 337 are enriched in pro residues; that stretch reads APPPATPPPQQHPPGPG. The span at 369–380 shows a compositional bias: low complexity; sequence QLQSRNQHRNLN. The residue at position 385 (arginine 385) is an Omega-N-methylarginine. Residues 385–394 show a composition bias toward basic and acidic residues; that stretch reads RGGHRVSHQD. Residues 389 to 448 are region H; sequence RVSHQDHLRKDPYANLMLQREKDWVSKIQMMQLQSTDPYLDDFYYQNYFEKLEKSSAAEE. The tract at residues 398–770 is involved in nuclear speckle localization; it reads KDPYANLMLQ…TKLQLVQGMR (373 aa). The region C stretch occupies residues 449–770; it reads MQGDGPKKER…TKLQLVQGMR (322 aa).

It belongs to the PAT1 family. In terms of assembly, interacts (via region A) with DDX6/RCK. Interacts (via region H and region C) with LSM1 and LSM4. Interacts (via region N) with DCP1A, DCP2, EDC3, EDC4 and XRN1. Interacts with the CCR4-NOT complex. Interacts with the Lsm-containing SMN-Sm protein complex. Interacts with EIF4ENIF1/4E-T.

The protein resides in the cytoplasm. The protein localises to the P-body. It is found in the nucleus. It localises to the PML body. Its subcellular location is the nucleus speckle. In terms of biological role, RNA-binding protein involved in deadenylation-dependent decapping of mRNAs, leading to the degradation of mRNAs. Acts as a scaffold protein that connects deadenylation and decapping machinery. Required for cytoplasmic mRNA processing body (P-body) assembly. The chain is Protein PAT1 homolog 1 (Patl1) from Rattus norvegicus (Rat).